Consider the following 237-residue polypeptide: Peroxisomal membrane protein 11-1 (237 aa).

The Cytoplasmic segment spans residues 1–92 (MSTLDATRAE…TLVLLGKSKN (92 aa)). A helical membrane pass occupies residues 93–113 (ALLSTFLFLDQFVWLGRTGIY). The Lumenal segment spans residues 114–204 (KNKERTDRIV…VGLLQLSPKK (91 aa)). The chain crosses the membrane as a helical span at residues 205 to 223 (ITPRVTGAFGFVTSLISCY). Residues 224–237 (QQLPSRAPAIKVKA) lie on the Cytoplasmic side of the membrane.

Belongs to the peroxin-11 family. In terms of tissue distribution, expressed in seedlings, leaf sheaths, flag leaf, panicles and spikelets.

Its subcellular location is the peroxisome membrane. Functionally, involved in peroxisomal proliferation. The polypeptide is Peroxisomal membrane protein 11-1 (PEX11-1) (Oryza sativa subsp. japonica (Rice)).